Here is a 558-residue protein sequence, read N- to C-terminus: 2-isopropylmalate synthase (558 aa).

In terms of domain architecture, Pyruvate carboxyltransferase spans 30–303; the sequence is PIWCSVDLRD…DPKLDFSNIP (274 aa). Residues D39, H242, H244, and N278 each contribute to the Mg(2+) site. Residues 438–558 form a regulatory domain region; it reads LNNTLCVQDF…GLVSALNRII (121 aa).

Belongs to the alpha-IPM synthase/homocitrate synthase family. LeuA type 2 subfamily. Homodimer. Mg(2+) is required as a cofactor.

The protein resides in the cytoplasm. The enzyme catalyses 3-methyl-2-oxobutanoate + acetyl-CoA + H2O = (2S)-2-isopropylmalate + CoA + H(+). It participates in amino-acid biosynthesis; L-leucine biosynthesis; L-leucine from 3-methyl-2-oxobutanoate: step 1/4. In terms of biological role, catalyzes the condensation of the acetyl group of acetyl-CoA with 3-methyl-2-oxobutanoate (2-ketoisovalerate) to form 3-carboxy-3-hydroxy-4-methylpentanoate (2-isopropylmalate). The sequence is that of 2-isopropylmalate synthase from Helicobacter hepaticus (strain ATCC 51449 / 3B1).